The following is a 356-amino-acid chain: Aromatic dipeptide epimerase (356 aa).

Substrate-binding positions include T136 and 161–163 (KVK). Mg(2+)-binding residues include D191, E219, and D244. Substrate-binding positions include K268 and 320–322 (DLD).

It belongs to the mandelate racemase/muconate lactonizing enzyme family. Requires Mg(2+) as cofactor.

Its function is as follows. Has epimerase activity with a variety of hydrophobic dipeptides (in vitro). Enzyme activity is highest with L-Phe-L-Tyr, but is still relatively low, suggesting that L-Phe-L-Tyr is not the physiological substrate. The polypeptide is Aromatic dipeptide epimerase (Herpetosiphon aurantiacus (strain ATCC 23779 / DSM 785 / 114-95)).